The sequence spans 538 residues: UNC93-like protein (538 aa).

Residue N45 is glycosylated (N-linked (GlcNAc...) asparagine). The next 5 membrane-spanning stretches (helical) occupy residues 46–66 (ISII…TANL), 80–100 (SLSA…TLII), 105–125 (VKWT…FQLF), 128–148 (FYTL…MWAS), and 170–190 (AIIV…ELWG). Residue N210 is glycosylated (N-linked (GlcNAc...) asparagine). The next 7 helical transmembrane spans lie at 244–264 (IFEI…IIAF), 305–325 (LLIP…ADFT), 338–358 (IGFV…LFGS), 366–386 (TPII…ELFW), 394–414 (IIFY…QTQI), 435–455 (LWES…CTQM), and 457–477 (LYIL…VEIL).

This sequence belongs to the unc-93 family.

It is found in the membrane. In Drosophila melanogaster (Fruit fly), this protein is UNC93-like protein.